The chain runs to 130 residues: Small ribosomal subunit protein uS8 (130 aa).

Belongs to the universal ribosomal protein uS8 family. In terms of assembly, part of the 30S ribosomal subunit. Contacts proteins S5 and S12.

Its function is as follows. One of the primary rRNA binding proteins, it binds directly to 16S rRNA central domain where it helps coordinate assembly of the platform of the 30S subunit. In Shewanella frigidimarina (strain NCIMB 400), this protein is Small ribosomal subunit protein uS8.